The following is a 243-amino-acid chain: Ribonuclease PH (243 aa).

Phosphate contacts are provided by residues R91 and 129–131; that span reads GTR.

Belongs to the RNase PH family. Homohexameric ring arranged as a trimer of dimers.

The catalysed reaction is tRNA(n+1) + phosphate = tRNA(n) + a ribonucleoside 5'-diphosphate. Functionally, phosphorolytic 3'-5' exoribonuclease that plays an important role in tRNA 3'-end maturation. Removes nucleotide residues following the 3'-CCA terminus of tRNAs; can also add nucleotides to the ends of RNA molecules by using nucleoside diphosphates as substrates, but this may not be physiologically important. Probably plays a role in initiation of 16S rRNA degradation (leading to ribosome degradation) during starvation. This Burkholderia mallei (strain NCTC 10247) protein is Ribonuclease PH.